An 87-amino-acid chain; its full sequence is Acyl-CoA-binding protein (87 aa).

The ACB domain occupies 3 to 87 (LKEEFEEHAV…KVKQLLEESA (85 aa)). Residues 30–34 (YGLYK), Lys56, and Tyr75 contribute to the an acyl-CoA site.

The protein belongs to the ACBP family.

Functionally, binds medium- and long-chain acyl-CoA esters with very high affinity and may function as an intracellular carrier of acyl-CoA esters. This Fritillaria agrestis (Stinkbells) protein is Acyl-CoA-binding protein (ACABP).